Here is a 314-residue protein sequence, read N- to C-terminus: Methionyl-tRNA formyltransferase (314 aa).

(6S)-5,6,7,8-tetrahydrofolate is bound at residue 111 to 114 (SLLP).

This sequence belongs to the Fmt family.

The catalysed reaction is L-methionyl-tRNA(fMet) + (6R)-10-formyltetrahydrofolate = N-formyl-L-methionyl-tRNA(fMet) + (6S)-5,6,7,8-tetrahydrofolate + H(+). Its function is as follows. Attaches a formyl group to the free amino group of methionyl-tRNA(fMet). The formyl group appears to play a dual role in the initiator identity of N-formylmethionyl-tRNA by promoting its recognition by IF2 and preventing the misappropriation of this tRNA by the elongation apparatus. This chain is Methionyl-tRNA formyltransferase, found in Chlorobium chlorochromatii (strain CaD3).